Here is a 127-residue protein sequence, read N- to C-terminus: Large ribosomal subunit protein bL17 (127 aa).

The protein belongs to the bacterial ribosomal protein bL17 family. As to quaternary structure, part of the 50S ribosomal subunit. Contacts protein L32.

The protein is Large ribosomal subunit protein bL17 of Stenotrophomonas maltophilia (strain R551-3).